A 143-amino-acid chain; its full sequence is Large ribosomal subunit protein uL15 (143 aa).

The interval 1–56 (MQLNSIKPAAGAKHAKRRVGRGIGSGLGKTAGRGHKGQKSRAGGYHKVGFEGGQMP) is disordered. Residues 21–31 (RGIGSGLGKTA) show a composition bias toward gly residues.

This sequence belongs to the universal ribosomal protein uL15 family. As to quaternary structure, part of the 50S ribosomal subunit.

Binds to the 23S rRNA. This Verminephrobacter eiseniae (strain EF01-2) protein is Large ribosomal subunit protein uL15.